A 160-amino-acid polypeptide reads, in one-letter code: 2-C-methyl-D-erythritol 2,4-cyclodiphosphate synthase (160 aa).

The a divalent metal cation site is built by Asp10 and His12. Residues Asp10–His12 and His36–Ser37 each bind 4-CDP-2-C-methyl-D-erythritol 2-phosphate. His44 is an a divalent metal cation binding site. Residues Asp58–Gly60, Phe63–Asp67, and Arg144 each bind 4-CDP-2-C-methyl-D-erythritol 2-phosphate.

It belongs to the IspF family. As to quaternary structure, homotrimer. A divalent metal cation is required as a cofactor.

The catalysed reaction is 4-CDP-2-C-methyl-D-erythritol 2-phosphate = 2-C-methyl-D-erythritol 2,4-cyclic diphosphate + CMP. Its pathway is isoprenoid biosynthesis; isopentenyl diphosphate biosynthesis via DXP pathway; isopentenyl diphosphate from 1-deoxy-D-xylulose 5-phosphate: step 4/6. In terms of biological role, involved in the biosynthesis of isopentenyl diphosphate (IPP) and dimethylallyl diphosphate (DMAPP), two major building blocks of isoprenoid compounds. Catalyzes the conversion of 4-diphosphocytidyl-2-C-methyl-D-erythritol 2-phosphate (CDP-ME2P) to 2-C-methyl-D-erythritol 2,4-cyclodiphosphate (ME-CPP) with a corresponding release of cytidine 5-monophosphate (CMP). In Dechloromonas aromatica (strain RCB), this protein is 2-C-methyl-D-erythritol 2,4-cyclodiphosphate synthase.